Reading from the N-terminus, the 336-residue chain is G patch domain and ankyrin repeat-containing protein 1 homolog (336 aa).

ANK repeat units follow at residues 123–152 and 156–185; these read FGWTALMMAACEGATEAVSWLVQRGVQVET and SGNTALKLAQRKGHLDVVHLLESLPILEET. In terms of domain architecture, G-patch spans 240–286; that stretch reads AKNRGLQLMVKQGWDQEHGLGPSQSGRLYPVKTVLRKQRTGLGIEQQ.

This is G patch domain and ankyrin repeat-containing protein 1 homolog from Drosophila melanogaster (Fruit fly).